A 257-amino-acid chain; its full sequence is Triosephosphate isomerase (257 aa).

9–11 is a substrate binding site; it reads NWK. H97 (electrophile) is an active-site residue. E169 serves as the catalytic Proton acceptor. Substrate contacts are provided by residues G175, S214, and 235–236; that span reads GG.

The protein belongs to the triosephosphate isomerase family. Homodimer.

Its subcellular location is the cytoplasm. The catalysed reaction is D-glyceraldehyde 3-phosphate = dihydroxyacetone phosphate. Its pathway is carbohydrate biosynthesis; gluconeogenesis. The protein operates within carbohydrate degradation; glycolysis; D-glyceraldehyde 3-phosphate from glycerone phosphate: step 1/1. Its function is as follows. Involved in the gluconeogenesis. Catalyzes stereospecifically the conversion of dihydroxyacetone phosphate (DHAP) to D-glyceraldehyde-3-phosphate (G3P). The sequence is that of Triosephosphate isomerase from Vibrio cholerae serotype O1 (strain ATCC 39315 / El Tor Inaba N16961).